A 502-amino-acid polypeptide reads, in one-letter code: uncharacterized protein (502 aa).

Low complexity-rich tracts occupy residues 1-10 (MQSTTNNNTN), 28-47 (SNRS…NNLS), and 155-171 (NTED…SVNS). 4 disordered regions span residues 1-57 (MQST…VISY), 155-181 (NTED…LSAR), 212-362 (SLGN…TDKF), and 438-487 (TIDQ…TSNL). The segment covering 212-230 (SLGNSERNSPDRPSTQGDS) has biased composition (polar residues). Low complexity-rich tracts occupy residues 242–290 (RNAS…SSRN) and 309–327 (SNKN…TSIK). A compositionally biased stretch (polar residues) spans 339 to 348 (QTNKSKNQRG). The span at 446-460 (TSDKNNSTKSNTKYN) shows a compositional bias: low complexity. Over residues 470–487 (SYGTSKRSHNRSSNTSNL) the composition is skewed to polar residues.

Its subcellular location is the virion. This is an uncharacterized protein from Acanthamoeba polyphaga (Amoeba).